Consider the following 222-residue polypeptide: Deoxyribose-phosphate aldolase (222 aa).

The active-site Proton donor/acceptor is Asp-91. The active-site Schiff-base intermediate with acetaldehyde is Lys-153. Lys-182 functions as the Proton donor/acceptor in the catalytic mechanism.

The protein belongs to the DeoC/FbaB aldolase family. DeoC type 1 subfamily.

It is found in the cytoplasm. The enzyme catalyses 2-deoxy-D-ribose 5-phosphate = D-glyceraldehyde 3-phosphate + acetaldehyde. It participates in carbohydrate degradation; 2-deoxy-D-ribose 1-phosphate degradation; D-glyceraldehyde 3-phosphate and acetaldehyde from 2-deoxy-alpha-D-ribose 1-phosphate: step 2/2. Its function is as follows. Catalyzes a reversible aldol reaction between acetaldehyde and D-glyceraldehyde 3-phosphate to generate 2-deoxy-D-ribose 5-phosphate. This is Deoxyribose-phosphate aldolase from Mycoplasma capricolum subsp. capricolum (strain California kid / ATCC 27343 / NCTC 10154).